Reading from the N-terminus, the 828-residue chain is Glycerol-3-phosphate acyltransferase (828 aa).

An HXXXXD motif motif is present at residues 309-314 (CHRSHI).

The protein belongs to the GPAT/DAPAT family.

The protein localises to the cell inner membrane. It carries out the reaction sn-glycerol 3-phosphate + an acyl-CoA = a 1-acyl-sn-glycero-3-phosphate + CoA. Its pathway is phospholipid metabolism; CDP-diacylglycerol biosynthesis; CDP-diacylglycerol from sn-glycerol 3-phosphate: step 1/3. This Pseudomonas putida (strain GB-1) protein is Glycerol-3-phosphate acyltransferase.